The primary structure comprises 602 residues: SAGA complex subunit SPT8 (602 aa).

The disordered stretch occupies residues 1–141 (MDEVDDILIN…REASSSTHEA (141 aa)). Acidic residues-rich tracts occupy residues 14-23 (VDDEEDDEEM) and 36-75 (EGNDDGGEDEEDDDDDDEDDDDDEDEREDDDEQEDDDGED). Position 85 is a phosphothreonine (Thr-85). 3 positions are modified to phosphoserine: Ser-108, Ser-123, and Ser-131. 2 WD repeats span residues 173–212 (PIQTHVNALAVSRGLKYLFLGGSDGYIRKYDLLNTLEGKL) and 305–346 (GHTQ…NEFK). Residues 366–418 (VSGNVNSGKENENADDDMDSLFGDEDEDEKQDAGNEPVETGDGSNGEENKEQI) are disordered. Positions 378 to 395 (NADDDMDSLFGDEDEDEK) are enriched in acidic residues. 3 WD repeats span residues 415 to 454 (KEQISEESLNIVYDESVFMTSGLNGSVHIWDRRMTQSPAL), 506 to 544 (SISGPVSCVKAMPNNKHLLCASRDNIRLYNVEIAVDASN), and 560 to 600 (HHGG…YDID). Ser-451 bears the Phosphoserine mark.

This sequence belongs to the WD repeat SPT8 family. As to quaternary structure, component of the 1.8 MDa SAGA (Spt-Ada-Gcn5 acetyltransferase) complex, which is composed of 19 subunits TRA1, SPT7, TAF5, NGG1/ADA3, SGF73, SPT20/ADA5, SPT8, TAF12, TAF6, HFI1/ADA1, UBP8, GCN5, ADA2, SPT3, SGF29, TAF10, TAF9, SGF11 and SUS1. The SAGA complex is composed of 4 modules, namely the HAT (histone acetyltransferase) module (GCN5, ADA2, NGG1/ADA3 and SGF29), the DUB (deubiquitinating) module (UBP8, SGF11, SGF73 and SUS1), the core or TAF (TBP-associated factor) module (TAF5, TAF6, TAF9, TAF10 and TAF12), and the Tra1 or SPT (Suppressor of Ty) module (TRA1, HFI1/ADA1, SPT3, SPT7, SPT8 and SPT20/ADA5). The Tra1/SPT module binds activators, the core module recruits TBP (TATA-binding protein), the HAT module contains the histone H3 acetyltransferase GCN5, and the DUB module comprises the histone H2B deubiquitinase UBP8.

The protein resides in the nucleus. Its function is as follows. Component of the transcription coactivator SAGA complex. SAGA acts as a general cofactor required for essentially all RNA polymerase II transcription. At the promoters, SAGA is required for transcription pre-initiation complex (PIC) recruitment. It influences RNA polymerase II transcriptional activity through different activities such as TBP interaction (via core/TAF module) and promoter selectivity, interaction with transcription activators (via Tra1/SPT module), and chromatin modification through histone acetylation (via HAT module) and deubiquitination (via DUB module). SAGA preferentially acetylates histones H3 (to form H3K9ac, H3K14ac, H3K18ac and H3K23ac) and H2B and deubiquitinates histone H2B. SAGA interacts with DNA via upstream activating sequences (UASs). During SAGA-mediated transcriptional inhibition, SPT3 and SPT8 prevent binding of TBP to the TATA box. This chain is SAGA complex subunit SPT8 (SPT8), found in Saccharomyces cerevisiae (strain ATCC 204508 / S288c) (Baker's yeast).